A 648-amino-acid polypeptide reads, in one-letter code: Mitochondrial Rho GTPase 1 (648 aa).

Topologically, residues 1–619 (MARYAAGAVD…KHYNRLINRS (619 aa)) are cytoplasmic. Serine 14 carries the phosphoserine modification. The 168-residue stretch at 15–182 (PKSVRIVVVG…FYYAQKTVLH (168 aa)) folds into the Miro 1 domain. 2 consecutive EF-hand domains span residues 198–233 (RCVRALKRIFILCDHDRDGALSEAELNDFQVKCFHA) and 319–354 (AAIDFLKGMYMLFDDDQDNNLRPQEIEDLFSTAPES). 9 residues coordinate Ca(2+): aspartate 211, aspartate 213, aspartate 215, glutamate 222, aspartate 332, aspartate 334, aspartate 336, asparagine 338, and glutamate 343. The 169-residue stretch at 427–595 (RKVFQCFVFG…FRKILTAAQH (169 aa)) folds into the Miro 2 domain. A helical membrane pass occupies residues 620–640 (LMAVSIGAAAVVVGLAAYRVY). Topologically, residues 641 to 648 (ATRKSSSA) are mitochondrial intermembrane.

This sequence belongs to the mitochondrial Rho GTPase family. In terms of tissue distribution, expressed in roots, leaves, stems, flowers and siliques.

Its subcellular location is the mitochondrion outer membrane. Functionally, mitochondrial GTPase required to maintain proper development, morphology and intracellular distribution of mitochondria, which in turn are essential for the progress of embryonic cell division, development of haploid male and female gametes, and pollen tube growth. The polypeptide is Mitochondrial Rho GTPase 1 (Arabidopsis thaliana (Mouse-ear cress)).